The sequence spans 217 residues: Probable GTP-binding protein EngB (217 aa).

The 185-residue stretch at 33 to 217 folds into the EngB-type G domain; the sequence is GPAEIAFAGR…RITIEQAVAR (185 aa). GTP contacts are provided by residues 41-48, 68-72, 95-98, 162-165, and 196-198; these read GRSNVGKS, GRTQE, DMPG, TKTD, and TSS. Mg(2+) contacts are provided by Ser48 and Thr70.

It belongs to the TRAFAC class TrmE-Era-EngA-EngB-Septin-like GTPase superfamily. EngB GTPase family. It depends on Mg(2+) as a cofactor.

Its function is as follows. Necessary for normal cell division and for the maintenance of normal septation. This Sinorhizobium fredii (strain NBRC 101917 / NGR234) protein is Probable GTP-binding protein EngB.